We begin with the raw amino-acid sequence, 34 residues long: Cycloamanide E proprotein (34 aa).

A propeptide spanning residues 1 to 10 (MSDINAARLP) is cleaved from the precursor. Positions 11-17 (SFFFPVP) form a cross-link, cyclopeptide (Ser-Pro). The propeptide occupies 18-34 (CISDDIEMVLTRGESLC).

Belongs to the MSDIN fungal toxin family. In terms of processing, processed by the macrocyclase-peptidase enzyme POPB to yield a cyclic decapeptide. POPB first removes 10 residues from the N-terminus. Conformational trapping of the remaining peptide forces the enzyme to release this intermediate rather than proceed to macrocyclization. The enzyme rebinds the remaining peptide in a different conformation and catalyzes macrocyclization of the N-terminal 7 residues.

Its function is as follows. Cyclic heptapeptide that belongs to the MSDIN-like toxin family responsible for a large number of food poisoning cases and deaths. Cycloaminide E is structurally related to other cycloamanides that are non-toxic to mammals but show immunosuppressive activity. The sequence is that of Cycloamanide E proprotein from Amanita phalloides (Death cap).